Here is a 700-residue protein sequence, read N- to C-terminus: ATP-dependent zinc metalloprotease FtsH (700 aa).

Residues 1-20 (MSSDNGSGRQGGDRGGSTGY) are Cytoplasmic-facing. Residues 21 to 41 (NLLMYLGFGAIIATLVALYVL) form a helical membrane-spanning segment. Over 42–171 (QMFQTSLDYT…FRHADPPGPW (130 aa)) the chain is Periplasmic. The helical transmembrane segment at 172–192 (EQHSQLIIGMLLAAMLIYIVV) threads the bilayer. Residues 193 to 700 (RRLSAAGSPM…ITAPATERSG (508 aa)) are Cytoplasmic-facing. An ATP-binding site is contributed by 262-269 (GPPGTGKT). A Zn(2+)-binding site is contributed by His484. Residue Glu485 is part of the active site. Residues His488 and Asp561 each coordinate Zn(2+).

This sequence in the central section; belongs to the AAA ATPase family. It in the C-terminal section; belongs to the peptidase M41 family. Homohexamer. The cofactor is Zn(2+).

The protein resides in the cell inner membrane. In terms of biological role, acts as a processive, ATP-dependent zinc metallopeptidase for both cytoplasmic and membrane proteins. Plays a role in the quality control of integral membrane proteins. The protein is ATP-dependent zinc metalloprotease FtsH of Pirellula staleyi (strain ATCC 27377 / DSM 6068 / ICPB 4128) (Pirella staleyi).